A 211-amino-acid polypeptide reads, in one-letter code: Nucleoside triphosphate pyrophosphatase (211 aa).

D75 serves as the catalytic Proton acceptor.

Belongs to the Maf family. Requires a divalent metal cation as cofactor.

It is found in the cytoplasm. It carries out the reaction a ribonucleoside 5'-triphosphate + H2O = a ribonucleoside 5'-phosphate + diphosphate + H(+). The catalysed reaction is a 2'-deoxyribonucleoside 5'-triphosphate + H2O = a 2'-deoxyribonucleoside 5'-phosphate + diphosphate + H(+). In terms of biological role, nucleoside triphosphate pyrophosphatase. May have a dual role in cell division arrest and in preventing the incorporation of modified nucleotides into cellular nucleic acids. This Prochlorococcus marinus (strain NATL2A) protein is Nucleoside triphosphate pyrophosphatase.